Reading from the N-terminus, the 214-residue chain is tRNA (guanine-N(7)-)-methyltransferase (214 aa).

The S-adenosyl-L-methionine site is built by Glu-43, Glu-68, Asp-95, and Asp-117. Residue Asp-117 is part of the active site. Substrate-binding positions include Lys-121, Asp-153, and 190 to 193; that span reads TEYE.

It belongs to the class I-like SAM-binding methyltransferase superfamily. TrmB family.

The catalysed reaction is guanosine(46) in tRNA + S-adenosyl-L-methionine = N(7)-methylguanosine(46) in tRNA + S-adenosyl-L-homocysteine. It functions in the pathway tRNA modification; N(7)-methylguanine-tRNA biosynthesis. In terms of biological role, catalyzes the formation of N(7)-methylguanine at position 46 (m7G46) in tRNA. The polypeptide is tRNA (guanine-N(7)-)-methyltransferase (Staphylococcus aureus (strain COL)).